The following is a 119-amino-acid chain: Iron-sulfur cluster insertion protein ErpA (119 aa).

C47, C111, and C113 together coordinate iron-sulfur cluster.

Belongs to the HesB/IscA family. As to quaternary structure, homodimer. The cofactor is iron-sulfur cluster.

Functionally, required for insertion of 4Fe-4S clusters for at least IspG. The protein is Iron-sulfur cluster insertion protein ErpA of Blochmanniella floridana.